A 460-amino-acid chain; its full sequence is tRNA modification GTPase MnmE (460 aa).

Residues Arg-26, Glu-88, and Arg-127 each contribute to the (6S)-5-formyl-5,6,7,8-tetrahydrofolate site. A TrmE-type G domain is found at 222 to 381; that stretch reads GLKVAIVGRP…LESAILSKVQ (160 aa). Asn-232 is a binding site for K(+). Residues 232–237, 251–257, and 276–279 contribute to the GTP site; these read NVGKSS, TELPGTT, and DTAG. Residue Ser-236 participates in Mg(2+) binding. The K(+) site is built by Thr-251, Leu-253, and Thr-256. Residue Thr-257 participates in Mg(2+) binding. Position 460 (Lys-460) interacts with (6S)-5-formyl-5,6,7,8-tetrahydrofolate.

It belongs to the TRAFAC class TrmE-Era-EngA-EngB-Septin-like GTPase superfamily. TrmE GTPase family. As to quaternary structure, homodimer. Heterotetramer of two MnmE and two MnmG subunits. K(+) is required as a cofactor.

It is found in the cytoplasm. Functionally, exhibits a very high intrinsic GTPase hydrolysis rate. Involved in the addition of a carboxymethylaminomethyl (cmnm) group at the wobble position (U34) of certain tRNAs, forming tRNA-cmnm(5)s(2)U34. The protein is tRNA modification GTPase MnmE of Cyanothece sp. (strain PCC 7425 / ATCC 29141).